The chain runs to 487 residues: Ribulose bisphosphate carboxylase large chain (487 aa).

Substrate contacts are provided by asparagine 127 and threonine 177. The Proton acceptor role is filled by lysine 179. Lysine 181 serves as a coordination point for substrate. Lysine 205, aspartate 207, and glutamate 208 together coordinate Mg(2+). Lysine 205 bears the N6-carboxylysine mark. Histidine 297 serves as the catalytic Proton acceptor. Substrate contacts are provided by arginine 298, histidine 330, and serine 382.

The protein belongs to the RuBisCO large chain family. Type I subfamily. Heterohexadecamer of 8 large chains and 8 small chains. The cofactor is Mg(2+).

The catalysed reaction is 2 (2R)-3-phosphoglycerate + 2 H(+) = D-ribulose 1,5-bisphosphate + CO2 + H2O. The enzyme catalyses D-ribulose 1,5-bisphosphate + O2 = 2-phosphoglycolate + (2R)-3-phosphoglycerate + 2 H(+). Its function is as follows. RuBisCO catalyzes two reactions: the carboxylation of D-ribulose 1,5-bisphosphate, the primary event in carbon dioxide fixation, as well as the oxidative fragmentation of the pentose substrate. Both reactions occur simultaneously and in competition at the same active site. This Paracoccus denitrificans (strain Pd 1222) protein is Ribulose bisphosphate carboxylase large chain.